We begin with the raw amino-acid sequence, 455 residues long: MQAATETIAAIATAPGRGGVGIVRVSGPLAGRIAVEVSGRELKPRHAHYGPFLDGGGQVIDEGLSLYFPGPNSFTGEDVLELQGHGGPVVLDLLVQRCLELGARQARPGEFSERAFLNDKLDLAQAEAIADLIEASSEQAARNALRSLQGEFSRRVHALTEQLISLRIYVEAAIDFPEEEIDFLADGHVLGLLEKVRTELSTVRREASQGALLRDGMTVVIAGRPNAGKSSLLNALAGREAAIVTDIAGTTRDVLREHIHIDGMPLHVVDTAGLRDTEDHVEKIGVERALKAIGEADRVLLVVDATAPEAADPFSLWPEFLDQRPEPGKVTLIRNKADLSTEAIGLEESADGHVTITLSARTNAGLELLREHLKACMGFEQTAESGFSARRRHLEALRLAGNALEHGHAQLIHNGAGELLAEDLRQAQQHLGEITGAFTPDDLLGRIFSSFCIGK.

The (6S)-5-formyl-5,6,7,8-tetrahydrofolate site is built by R24, E81, and K120. Residues 216–378 (GMTVVIAGRP…LREHLKACMG (163 aa)) form the TrmE-type G domain. A K(+)-binding site is contributed by N226. GTP is bound by residues 226 to 231 (NAGKSS), 245 to 251 (TDIAGTT), 270 to 273 (DTAG), 335 to 338 (NKAD), and 359 to 361 (SAR). S230 lines the Mg(2+) pocket. K(+)-binding residues include T245, I247, and T250. A Mg(2+)-binding site is contributed by T251. (6S)-5-formyl-5,6,7,8-tetrahydrofolate is bound at residue K455.

Belongs to the TRAFAC class TrmE-Era-EngA-EngB-Septin-like GTPase superfamily. TrmE GTPase family. As to quaternary structure, homodimer. Heterotetramer of two MnmE and two MnmG subunits. K(+) is required as a cofactor.

Its subcellular location is the cytoplasm. Exhibits a very high intrinsic GTPase hydrolysis rate. Involved in the addition of a carboxymethylaminomethyl (cmnm) group at the wobble position (U34) of certain tRNAs, forming tRNA-cmnm(5)s(2)U34. The protein is tRNA modification GTPase MnmE of Pseudomonas paraeruginosa (strain DSM 24068 / PA7) (Pseudomonas aeruginosa (strain PA7)).